Consider the following 488-residue polypeptide: UDP-N-acetylmuramate--L-alanine ligase (488 aa).

122 to 128 (GTHGKTT) is an ATP binding site.

Belongs to the MurCDEF family.

It localises to the cytoplasm. The enzyme catalyses UDP-N-acetyl-alpha-D-muramate + L-alanine + ATP = UDP-N-acetyl-alpha-D-muramoyl-L-alanine + ADP + phosphate + H(+). The protein operates within cell wall biogenesis; peptidoglycan biosynthesis. Its function is as follows. Cell wall formation. This chain is UDP-N-acetylmuramate--L-alanine ligase, found in Mycobacterium ulcerans (strain Agy99).